The primary structure comprises 151 residues: Putative pre-16S rRNA nuclease (151 aa).

Belongs to the YqgF nuclease family.

It localises to the cytoplasm. Functionally, could be a nuclease involved in processing of the 5'-end of pre-16S rRNA. The sequence is that of Putative pre-16S rRNA nuclease from Neisseria gonorrhoeae (strain ATCC 700825 / FA 1090).